A 387-amino-acid chain; its full sequence is Flap endonuclease 1 (387 aa).

Residues 1–104 form an N-domain region; the sequence is MGILGLSKLI…GELAKRAERR (104 aa). Asp-34 provides a ligand contact to Mg(2+). Positions 47 and 70 each coordinate DNA. The Mg(2+) site is built by Asp-86, Glu-158, Glu-160, Asp-179, and Asp-181. Positions 122 to 253 are I-domain; that stretch reads GIEKFNRRLV…KRAIELINNY (132 aa). A DNA-binding site is contributed by Glu-158. DNA is bound by residues Gly-231 and Asp-233. A Mg(2+)-binding site is contributed by Asp-233. An interaction with PCNA region spans residues 336–344; sequence TQVRLDSFF. Residues 345–387 are disordered; sequence KTLPSTPNATNAAKRKAEEAKKSANNKKAKTSGGGGGRGRRPK.

This sequence belongs to the XPG/RAD2 endonuclease family. FEN1 subfamily. Interacts with PCNA. Three molecules of FEN1 bind to one PCNA trimer with each molecule binding to one PCNA monomer. PCNA stimulates the nuclease activity without altering cleavage specificity. The cofactor is Mg(2+). In terms of processing, phosphorylated. Phosphorylation upon DNA damage induces relocalization to the nuclear plasma.

The protein resides in the nucleus. The protein localises to the nucleolus. Its subcellular location is the nucleoplasm. It localises to the mitochondrion. Its function is as follows. Structure-specific nuclease with 5'-flap endonuclease and 5'-3' exonuclease activities involved in DNA replication and repair. During DNA replication, cleaves the 5'-overhanging flap structure that is generated by displacement synthesis when DNA polymerase encounters the 5'-end of a downstream Okazaki fragment. It enters the flap from the 5'-end and then tracks to cleave the flap base, leaving a nick for ligation. Also involved in the long patch base excision repair (LP-BER) pathway, by cleaving within the apurinic/apyrimidinic (AP) site-terminated flap. Acts as a genome stabilization factor that prevents flaps from equilibrating into structures that lead to duplications and deletions. Also possesses 5'-3' exonuclease activity on nicked or gapped double-stranded DNA, and exhibits RNase H activity. Also involved in replication and repair of rDNA and in repairing mitochondrial DNA. This chain is Flap endonuclease 1, found in Drosophila yakuba (Fruit fly).